The primary structure comprises 38 residues: Large ribosomal subunit protein bL36 (38 aa).

This sequence belongs to the bacterial ribosomal protein bL36 family.

In Proteus mirabilis (strain HI4320), this protein is Large ribosomal subunit protein bL36.